A 223-amino-acid polypeptide reads, in one-letter code: Zinc-finger homeodomain protein 12 (223 aa).

Over residues 1–20 the composition is skewed to polar residues; sequence MSSLSKPNRQFLSPTTNNQD. The segment at 1-24 is disordered; the sequence is MSSLSKPNRQFLSPTTNNQDTGRE. Residues 37–88 form a ZF-HD dimerization-type; degenerate zinc finger; that stretch reads YNECLKNHAVSLGGHALDGCGEFTPKSTTILTDPPSLRCDACGCHRNFHRRS. The segment at residues 147 to 204 is a DNA-binding region (homeobox; atypical); sequence KKHKRTKFTAEQKVKMRGFAERAGWKINGWDEKWVREFCSEVGIERKVLKVWIHNNKY.

Homo- and heterodimer with other ZFHD proteins. Interacts with ZHD11.

Its subcellular location is the nucleus. Functionally, putative transcription factor. The chain is Zinc-finger homeodomain protein 12 (ZHD12) from Arabidopsis thaliana (Mouse-ear cress).